The chain runs to 443 residues: 23S rRNA (uracil(1939)-C(5))-methyltransferase RlmD (443 aa).

The 63-residue stretch at glutamine 4–glutamate 66 folds into the TRAM domain. Residues cysteine 79, cysteine 85, cysteine 88, and cysteine 167 each contribute to the [4Fe-4S] cluster site. S-adenosyl-L-methionine is bound by residues glutamine 275, phenylalanine 304, asparagine 309, glutamate 325, aspartate 352, and aspartate 373. The Nucleophile role is filled by cysteine 399.

Belongs to the class I-like SAM-binding methyltransferase superfamily. RNA M5U methyltransferase family. RlmD subfamily.

The catalysed reaction is uridine(1939) in 23S rRNA + S-adenosyl-L-methionine = 5-methyluridine(1939) in 23S rRNA + S-adenosyl-L-homocysteine + H(+). Catalyzes the formation of 5-methyl-uridine at position 1939 (m5U1939) in 23S rRNA. The chain is 23S rRNA (uracil(1939)-C(5))-methyltransferase RlmD from Xylella fastidiosa (strain Temecula1 / ATCC 700964).